Reading from the N-terminus, the 334-residue chain is Heat-inducible transcription repressor HrcA (334 aa).

This sequence belongs to the HrcA family.

Its function is as follows. Negative regulator of class I heat shock genes (grpE-dnaK-dnaJ and groELS operons). Prevents heat-shock induction of these operons. The chain is Heat-inducible transcription repressor HrcA from Acidovorax sp. (strain JS42).